The chain runs to 459 residues: MSSASSSSAASLLLGREVDVFLSFCCQTSHGYFQNILIRNGIRTFLSYRCLEKRFGPIGQRTLKALEESRVAVVMTSTTKPCSVGFLEELLVILEFQEKGSLMVIPIFLTDLSFNVEEICRQHPEKAPSWRTALTKLTNLAAEYPLSQNLAGMDQSDLLNQIARDISLVVFYSGSNDSNALVAMDRHMKVVYDLLALEVNKEVRTIGIWGSAGVGKTTLARYIYAEIFVNFQTHVFLDNVENMKDKLLKFEGEEDPTVIISSYHDGHEITEARRKHRKILLIADDVNNMEQGKWIIEYANWFAPGSRVILISQNKNLLVDAGVMDVYEVRSLRYDEALQVFSHFAFKQPYPPSDFEELAVRAVHLAGFLPLGLRLLGSFLAGKGREEWVAALLKLKAKQGGHIMEVWKLMEATDDKGLEEWETAADIVERKESSQDKSQQESEVAADILIGKESSQDKQ.

The region spanning 16-170 (REVDVFLSFC…QIARDISLVV (155 aa)) is the TIR domain. Glutamate 89 is an active-site residue. Residues 191–401 (VYDLLALEVN…LLKLKAKQGG (211 aa)) form the NB-ARC domain. Residues 429–440 (ERKESSQDKSQQ) are compositionally biased toward basic and acidic residues. The disordered stretch occupies residues 429–459 (ERKESSQDKSQQESEVAADILIGKESSQDKQ).

As to expression, mostly expressed in leaves, stems and roots, and, to a lower extent, in flowers and siliques.

It localises to the cytoplasm. It carries out the reaction NAD(+) + H2O = ADP-D-ribose + nicotinamide + H(+). Functionally, confers resistance to low temperatures by limiting chloroplast damage and cell death, thus maintaining growth homeostasis. The protein is Disease resistance protein CHL1 of Arabidopsis thaliana (Mouse-ear cress).